The chain runs to 118 residues: Non-specific lipid-transfer protein (118 aa).

An N-terminal signal peptide occupies residues Met-1–Ala-25. Cystine bridges form between Cys-30-Cys-76, Cys-40-Cys-53, Cys-54-Cys-98, and Cys-74-Cys-113.

This sequence belongs to the plant LTP family.

Plant non-specific lipid-transfer proteins transfer phospholipids as well as galactolipids across membranes. May play a role in wax or cutin deposition in the cell walls of expanding epidermal cells and certain secretory tissues. The sequence is that of Non-specific lipid-transfer protein from Ambrosia artemisiifolia (Common ragweed).